The sequence spans 416 residues: 4-hydroxy-3-methylbut-2-en-1-yl diphosphate synthase (flavodoxin) (416 aa).

Positions 304, 307, 350, and 357 each coordinate [4Fe-4S] cluster.

This sequence belongs to the IspG family. The cofactor is [4Fe-4S] cluster.

The catalysed reaction is (2E)-4-hydroxy-3-methylbut-2-enyl diphosphate + oxidized [flavodoxin] + H2O + 2 H(+) = 2-C-methyl-D-erythritol 2,4-cyclic diphosphate + reduced [flavodoxin]. It functions in the pathway isoprenoid biosynthesis; isopentenyl diphosphate biosynthesis via DXP pathway; isopentenyl diphosphate from 1-deoxy-D-xylulose 5-phosphate: step 5/6. Functionally, converts 2C-methyl-D-erythritol 2,4-cyclodiphosphate (ME-2,4cPP) into 1-hydroxy-2-methyl-2-(E)-butenyl 4-diphosphate. The sequence is that of 4-hydroxy-3-methylbut-2-en-1-yl diphosphate synthase (flavodoxin) from Burkholderia pseudomallei (strain K96243).